The primary structure comprises 288 residues: Probable ketoamine kinase VC_1539 (288 aa).

An ATP-binding site is contributed by 92 to 94 (NYL). Asp-195 (proton acceptor) is an active-site residue.

The protein belongs to the fructosamine kinase family.

Functionally, ketoamine kinase that phosphorylates ketoamines on the third carbon of the sugar moiety to generate ketoamine 3-phosphate. The chain is Probable ketoamine kinase VC_1539 from Vibrio cholerae serotype O1 (strain ATCC 39315 / El Tor Inaba N16961).